A 230-amino-acid polypeptide reads, in one-letter code: Small ribosomal subunit protein uS3 (230 aa).

In terms of domain architecture, KH type-2 spans 39 to 107; the sequence is VRNYLRQKLA…PVHVNIEEIR (69 aa). A disordered region spans residues 210 to 230; that stretch reads SSKPEHESKQRKAGRRNAAAN.

The protein belongs to the universal ribosomal protein uS3 family. As to quaternary structure, part of the 30S ribosomal subunit. Forms a tight complex with proteins S10 and S14.

Its function is as follows. Binds the lower part of the 30S subunit head. Binds mRNA in the 70S ribosome, positioning it for translation. The protein is Small ribosomal subunit protein uS3 of Neisseria meningitidis serogroup C (strain 053442).